A 209-amino-acid polypeptide reads, in one-letter code: Large ribosomal subunit protein bL9 (209 aa).

A disordered region spans residues 184 to 209 (SAASEDSDLVETPEDRATEEAEDEQP).

It belongs to the bacterial ribosomal protein bL9 family.

Binds to the 23S rRNA. The sequence is that of Large ribosomal subunit protein bL9 from Dinoroseobacter shibae (strain DSM 16493 / NCIMB 14021 / DFL 12).